We begin with the raw amino-acid sequence, 415 residues long: TYYTPDYETKDTDILAAFRVTPQPGVPPEGAGAAVAAESSTGTWTTVWTDGLTSLDRYKGRCYQIEPVAGEENQYIAYVAYPLDLFEEGSVTNMFTSIVGNVFGFKALRALRLEDLRIPPAYAKTFQGPPHGIQVERDKLNKYGRPLLGCTIKPKLGLSAKNYGRAVYECLRGGLDFTKDDENVNSQPFMRWRDRFLFVAEALFKAQAETGEIKGHYLNATAGTCEEMMKRAVFARELGVPIIMHDYLTGGFTANTSLAFYCRDNGLLLHIHRAMHAVIDRQKNHGMHFRVLAKALRMSGGDHIHVGTVVGKLEGEREVTLGFVDLLRDDYIEKDRSRGVYFTQDWVSMPGVLPVASGGIHVWHMPALTEIFGDDSVLQFGGGTVGHPWGNAPGAVANRVALEACVQARNEGRDL.

Substrate contacts are provided by N101 and T151. K153 serves as the catalytic Proton acceptor. K155 is a substrate binding site. Residues K179, D181, and E182 each contribute to the Mg(2+) site. N6-carboxylysine is present on K179. Residue H272 is the Proton acceptor of the active site. Residues R273, H305, and S357 each contribute to the substrate site.

Belongs to the RuBisCO large chain family. Type I subfamily. In terms of assembly, heterohexadecamer of 8 large chains and 8 small chains; disulfide-linked. The disulfide link is formed within the large subunit homodimers. Mg(2+) is required as a cofactor. In terms of processing, the disulfide bond which can form in the large chain dimeric partners within the hexadecamer appears to be associated with oxidative stress and protein turnover.

The protein resides in the plastid. The protein localises to the chloroplast. It catalyses the reaction 2 (2R)-3-phosphoglycerate + 2 H(+) = D-ribulose 1,5-bisphosphate + CO2 + H2O. The enzyme catalyses D-ribulose 1,5-bisphosphate + O2 = 2-phosphoglycolate + (2R)-3-phosphoglycerate + 2 H(+). Functionally, ruBisCO catalyzes two reactions: the carboxylation of D-ribulose 1,5-bisphosphate, the primary event in carbon dioxide fixation, as well as the oxidative fragmentation of the pentose substrate in the photorespiration process. Both reactions occur simultaneously and in competition at the same active site. This is Ribulose bisphosphate carboxylase large chain from Cibotium barometz (Scythian lamb).